Here is a 549-residue protein sequence, read N- to C-terminus: Glucose-6-phosphate isomerase (549 aa).

Lys80, Lys228, and Lys234 each carry N6-acetyllysine. Catalysis depends on Glu355, which acts as the Proton donor. Active-site residues include His386 and Lys514.

The protein belongs to the GPI family.

The protein localises to the cytoplasm. It catalyses the reaction alpha-D-glucose 6-phosphate = beta-D-fructose 6-phosphate. The protein operates within carbohydrate biosynthesis; gluconeogenesis. It participates in carbohydrate degradation; glycolysis; D-glyceraldehyde 3-phosphate and glycerone phosphate from D-glucose: step 2/4. Catalyzes the reversible isomerization of glucose-6-phosphate to fructose-6-phosphate. This is Glucose-6-phosphate isomerase from Escherichia coli (strain SE11).